The primary structure comprises 586 residues: Aspartate--tRNA ligase (586 aa).

L-aspartate is bound at residue E171. An aspartate region spans residues 195–198 (QLFK). An L-aspartate-binding site is contributed by R217. ATP is bound by residues 217–219 (RDE) and Q226. H448 contributes to the L-aspartate binding site. Position 482 (E482) interacts with ATP. R489 contacts L-aspartate. 534-537 (GLDR) is an ATP binding site.

This sequence belongs to the class-II aminoacyl-tRNA synthetase family. Type 1 subfamily. Homodimer.

The protein resides in the cytoplasm. The catalysed reaction is tRNA(Asp) + L-aspartate + ATP = L-aspartyl-tRNA(Asp) + AMP + diphosphate. In terms of biological role, catalyzes the attachment of L-aspartate to tRNA(Asp) in a two-step reaction: L-aspartate is first activated by ATP to form Asp-AMP and then transferred to the acceptor end of tRNA(Asp). The protein is Aspartate--tRNA ligase of Buchnera aphidicola subsp. Acyrthosiphon pisum (strain APS) (Acyrthosiphon pisum symbiotic bacterium).